A 279-amino-acid chain; its full sequence is Large ribosomal subunit protein uL2 (279 aa).

Residues G222–R279 form a disordered region. Residues I269–R279 are compositionally biased toward basic residues.

It belongs to the universal ribosomal protein uL2 family. Part of the 50S ribosomal subunit. Forms a bridge to the 30S subunit in the 70S ribosome.

Its function is as follows. One of the primary rRNA binding proteins. Required for association of the 30S and 50S subunits to form the 70S ribosome, for tRNA binding and peptide bond formation. It has been suggested to have peptidyltransferase activity; this is somewhat controversial. Makes several contacts with the 16S rRNA in the 70S ribosome. This is Large ribosomal subunit protein uL2 from Caulobacter vibrioides (strain ATCC 19089 / CIP 103742 / CB 15) (Caulobacter crescentus).